A 213-amino-acid polypeptide reads, in one-letter code: Elongation factor 1-beta (213 aa).

The segment covering 67-80 (AGKAPAASGSAAAA) has biased composition (low complexity). The disordered stretch occupies residues 67 to 88 (AGKAPAASGSAAAAAEEEDDED).

Belongs to the EF-1-beta/EF-1-delta family. As to quaternary structure, EF-1 is composed of 4 subunits: alpha, beta, delta, and gamma.

Functionally, EF-1-beta and EF-1-delta stimulate the exchange of GDP bound to EF-1-alpha to GTP. This is Elongation factor 1-beta (EFB1) from Candida albicans (strain WO-1) (Yeast).